The following is a 308-amino-acid chain: FGSLLGICLVTQIITGLLLATHYTADTNLAFASVAHTCRNVQFGWLIRNLHANGASFFFICIYLHIGRGIYYGSYLNKETWNTGVILLLTLMATAFVGYVLPWGQMSFWGATVITNLFSAIPYIGQTLVEWAWGGFSVDNPTLTRFFALHFLLPFVIAGITLVHLTFLHETGSNNPLGIPSDCDKIPFHPYYSMKDILGFALLFIALVAMALFSPNLLGDPENFTPANPLSTPPHIKPEWYFLFAYAILRSIPNKLGGVLALAASVLVLFLIPLLHTSKQRSMTFRPLSQILFWTLVANLLVLTWVGS.

4 helical membrane passes run Phe-1–Thr-21, Trp-45–Ile-66, Trp-81–Leu-101, and Phe-146–Thr-166. The heme b site is built by His-51 and His-65. Heme b contacts are provided by His-150 and His-164. A ubiquinone is bound at residue His-169. Transmembrane regions (helical) follow at residues Met-194–Ser-214, Leu-256–His-276, and Leu-288–Ser-308.

It belongs to the cytochrome b family. The cytochrome bc1 complex contains 11 subunits: 3 respiratory subunits (MT-CYB, CYC1 and UQCRFS1), 2 core proteins (UQCRC1 and UQCRC2) and 6 low-molecular weight proteins (UQCRH/QCR6, UQCRB/QCR7, UQCRQ/QCR8, UQCR10/QCR9, UQCR11/QCR10 and a cleavage product of UQCRFS1). This cytochrome bc1 complex then forms a dimer. It depends on heme b as a cofactor.

The protein resides in the mitochondrion inner membrane. Its function is as follows. Component of the ubiquinol-cytochrome c reductase complex (complex III or cytochrome b-c1 complex) that is part of the mitochondrial respiratory chain. The b-c1 complex mediates electron transfer from ubiquinol to cytochrome c. Contributes to the generation of a proton gradient across the mitochondrial membrane that is then used for ATP synthesis. The sequence is that of Cytochrome b (MT-CYB) from Amblyornis macgregoriae (Macgregor's bowerbird).